The following is a 302-amino-acid chain: Putative 2-dehydro-3-deoxy-D-gluconate aldolase YagE (302 aa).

Residues Ser49 and Tyr112 each act as charge relay system in the active site. The Proton donor role is filled by Tyr138. The Schiff-base intermediate with substrate role is filled by Lys167.

Belongs to the DapA family. As to quaternary structure, a dimer of dimers.

It is found in the cytoplasm. The enzyme catalyses 2-dehydro-3-deoxy-D-gluconate = D-glyceraldehyde + pyruvate. It carries out the reaction 2-dehydro-3-deoxy-D-arabinonate = glycolaldehyde + pyruvate. Catalyzes the formation of 2-keto-3-deoxy-gluconate (KDG) from pyruvate and glyceraldehyde. May also function as a 2-dehydro-3-deoxy-D-pentonate aldolase. Overexpression leads to increased growth (over 2 hours) in the presence of the antibiotics norfloxacin, ampicillin and streptomycin. In Escherichia coli (strain K12), this protein is Putative 2-dehydro-3-deoxy-D-gluconate aldolase YagE (yagE).